The sequence spans 259 residues: UPF0246 protein Pfl01_0961 (259 aa).

This sequence belongs to the UPF0246 family.

The chain is UPF0246 protein Pfl01_0961 from Pseudomonas fluorescens (strain Pf0-1).